Reading from the N-terminus, the 418-residue chain is Tyrosine--tRNA ligase (418 aa).

Tyrosine 34 contacts L-tyrosine. Residues 39-48 (PTADSLHLGH) carry the 'HIGH' region motif. L-tyrosine is bound by residues tyrosine 169 and glutamine 173. The 'KMSKS' region signature appears at 229-233 (KFGKS). Lysine 232 is a binding site for ATP. In terms of domain architecture, S4 RNA-binding spans 352 to 418 (LNLVDMLVTA…GKKKYAVLTY (67 aa)).

Belongs to the class-I aminoacyl-tRNA synthetase family. TyrS type 1 subfamily. Homodimer.

It is found in the cytoplasm. It carries out the reaction tRNA(Tyr) + L-tyrosine + ATP = L-tyrosyl-tRNA(Tyr) + AMP + diphosphate + H(+). Its function is as follows. Catalyzes the attachment of tyrosine to tRNA(Tyr) in a two-step reaction: tyrosine is first activated by ATP to form Tyr-AMP and then transferred to the acceptor end of tRNA(Tyr). This is Tyrosine--tRNA ligase from Streptococcus pyogenes serotype M3 (strain SSI-1).